Here is a 673-residue protein sequence, read N- to C-terminus: Cell division cycle protein 23 homolog (673 aa).

10 TPR repeats span residues 86-120 (AEMW…VLDN), 159-195 (NKEF…YQEH), 232-267 (EDVW…EPRI), 332-365 (PMII…DPYR), 400-433 (WETC…NPGL), 434-467 (AALW…DPAD), 469-501 (RGWY…KPHD), 502-535 (SRLL…GDVE), 539-572 (LWSL…VTSA), and 577-610 (IYAI…ETLC). A disordered region spans residues 628-673 (SRLPVEEAPGPSNASAAGGQEAMDTEEAPQEGGEEEMSEGEDDFSF). Residues 635–646 (APGPSNASAAGG) are compositionally biased toward low complexity. A compositionally biased stretch (acidic residues) spans 650–673 (MDTEEAPQEGGEEEMSEGEDDFSF).

It belongs to the APC8/CDC23 family. In terms of assembly, the APC/C complex is probably composed of at least 12 subunits: apc-2, apc-10, apc-11, cdc-26, emb-1, emb-27, emb-30, mat-1, mat-2, mat-3, such-1 and gfi-3.

Its pathway is protein modification; protein ubiquitination. Its function is as follows. Probable component of the anaphase promoting complex/cyclosome (APC/C), a cell cycle-regulated E3 ubiquitin ligase that controls progression through mitosis and the G1 phase of the cell cycle. The APC/C complex acts by mediating ubiquitination and subsequent degradation of target proteins. Developmental role in early embryogenesis and the metaphase to anaphase transition in oocyte and spermatocyte meiosis and mitosis in germ cells. Required for embryonic anterior-posterior axis formation. Plays a role in regulating the abundance of glr-1 receptors in postmitotic neurons, which may in turn control animal locomotion. Involved in regulating GABA neurotransmitter release at neuromuscular junctions in GABA motor neurons. This Caenorhabditis elegans protein is Cell division cycle protein 23 homolog.